A 607-amino-acid chain; its full sequence is Heterocyst differentiation ATP-binding protein HepA (607 aa).

Residues 32 to 330 (AILAVIFSFL…INGTVAFLST (299 aa)) form the ABC transmembrane type-1 domain. The next 5 helical transmembrane spans lie at 33-53 (ILAV…IGFL), 77-97 (ILAA…LILL), 163-182 (FSGL…YFVV), 186-208 (ISWQ…LSTL), and 290-310 (IVIS…FFFV). The ABC transporter domain maps to 364-598 (IDLVSVDFGY…RGKLWKYHQM (235 aa)). 397-404 (GASGAGKT) contacts ATP.

It belongs to the ABC transporter superfamily.

The protein localises to the cell inner membrane. In terms of biological role, acts early in the process of morphological differentiation of heterocysts. The polypeptide is Heterocyst differentiation ATP-binding protein HepA (hepA) (Nostoc sp. (strain PCC 7120 / SAG 25.82 / UTEX 2576)).